Consider the following 117-residue polypeptide: Cysteine rich necrotrophic effector Tox1 (117 aa).

Positions 1–17 (MKLTMVLSVAFATLTFA) are cleaved as a signal peptide. 8 disulfides stabilise this stretch: C36–C87, C44–C55, C53–C58, C54–C98, C63–C83, C67–C117, C86–C97, and C107–C110. The tract at residues 87 to 117 (CNAGGESHELCCSIASAGIDCNPCTAGLRMC) is chitin-binding domain.

As to quaternary structure, interacts with host cell wall-associated kinase receptor Snn1.

The protein resides in the secreted. In terms of biological role, necrotrophic effector that plays a critical role during fungal penetration, via its interaction with the host Snn1 protein. Snn1 is a member of the wall-associated kinase class of receptors, which are known to drive pathways for biotrophic pathogen resistance. Recognition of Tox1 by Snn1 induces mitogen-activated protein kinase genes such as MAPK3 and activates programmed cell death, which allows this necrotroph to gain nutrients and sporulate. Recognition of Tox1 by Snn1 also induces other plant defense responses, including oxidative burst and pathogenesis related (PR) gene expression. The development of necrosis and disease induced by Tox1, and particularly penetration during infection, requires light, which is probably related to the light-dependent expression of host Snn1. Tox1 plays an additional role in providing significant protection from wheat chitinases by binding chitin in the fungal cell wall. In Phaeosphaeria nodorum (strain SN15 / ATCC MYA-4574 / FGSC 10173) (Glume blotch fungus), this protein is Cysteine rich necrotrophic effector Tox1.